We begin with the raw amino-acid sequence, 144 residues long: 3-hydroxyacyl-[acyl-carrier-protein] dehydratase FabZ (144 aa).

Histidine 48 is a catalytic residue.

This sequence belongs to the thioester dehydratase family. FabZ subfamily.

The protein resides in the cytoplasm. The catalysed reaction is a (3R)-hydroxyacyl-[ACP] = a (2E)-enoyl-[ACP] + H2O. Functionally, involved in unsaturated fatty acids biosynthesis. Catalyzes the dehydration of short chain beta-hydroxyacyl-ACPs and long chain saturated and unsaturated beta-hydroxyacyl-ACPs. The chain is 3-hydroxyacyl-[acyl-carrier-protein] dehydratase FabZ from Chloroflexus aggregans (strain MD-66 / DSM 9485).